A 165-amino-acid chain; its full sequence is Protein YELLOW LEAF 1, choloroplastic (165 aa).

The N-terminal 51 residues, 1 to 51 (MPPLATMSSPGSLLLLTPAVYQGIGRNRGGQSQEGQSISSSRSLKTKLSVS), are a transit peptide targeting the chloroplast. A disordered region spans residues 71-118 (TQTARRKSFSGPTSPPSGSVKEKVRSPKLDDGGTGFPPFRFGGGGGGG). The span at 79 to 89 (FSGPTSPPSGS) shows a compositional bias: low complexity. A compositionally biased stretch (basic and acidic residues) spans 90-101 (VKEKVRSPKLDD).

Interacts with atpB. In terms of tissue distribution, highly expressed in leaves. Expressed in leaf sheaths. Expressed at low levels in stems.

The protein localises to the plastid. Its subcellular location is the chloroplast. Functionally, required for photosynthetic protein complex assembly in chloroplast thylakoid membranes during leaf development. Maintains the abundance of the core protein complex PsaA-PsaB of photosystem I (PSI) in the thylakoid membrane. May play a role in the efficient biogenesis of the chloroplast ATP synthase complex, possibly by interacting with the beta subunit atpB. The polypeptide is Protein YELLOW LEAF 1, choloroplastic (Oryza sativa subsp. japonica (Rice)).